The following is a 750-amino-acid chain: uncharacterized protein (750 aa).

Transmembrane regions (helical) follow at residues 2–22 (FVLL…TNVI), 33–53 (SLIL…DIFI), 79–99 (LLVL…VVSL), 116–136 (LSIF…TIML), and 143–163 (IQSL…SPIA). Disordered regions lie at residues 385–461 (DNKG…KKKE) and 571–651 (NKEF…PLTA). Basic and acidic residues predominate over residues 398-411 (ENTKGDDNSSEKTD). Positions 412–424 (TVSVSTKLKTTAD) are enriched in polar residues. Residues 425 to 436 (QSESTQMSSEST) show a composition bias toward low complexity. The segment covering 437–451 (ATGISSDPQSQGKMN) has biased composition (polar residues). Residues 452 to 461 (NKSEEQKKKE) show a composition bias toward basic and acidic residues. Polar residues predominate over residues 618 to 629 (DSKGNTATNSDT). Residues 724–744 (ATIVITLFLTVVLLAIAFFFF) form a helical membrane-spanning segment.

It to M.pneumoniae MPN_335.

It localises to the cell membrane. This is an uncharacterized protein from Mycoplasma pneumoniae (strain ATCC 29342 / M129 / Subtype 1) (Mycoplasmoides pneumoniae).